Consider the following 878-residue polypeptide: Phosphoenolpyruvate carboxylase (878 aa).

Residues H137 and K545 contribute to the active site.

The protein belongs to the PEPCase type 1 family. Requires Mg(2+) as cofactor.

It catalyses the reaction oxaloacetate + phosphate = phosphoenolpyruvate + hydrogencarbonate. Forms oxaloacetate, a four-carbon dicarboxylic acid source for the tricarboxylic acid cycle. The chain is Phosphoenolpyruvate carboxylase from Yersinia pestis bv. Antiqua (strain Antiqua).